The sequence spans 374 residues: MPPKQAPSKKAENKRKEKVIEDKTFGLKNKKGNKNQKFVAQIENQVRNNNTRMDLVRQQEAAKKKEKDELLDIQNLLKPVEQKVAKDVDPKSLLCVFFKQGLCGKGAKCKFSHDLAVAQKTAKKNLYADSREVEKDETNENWDKEKLDEVVNKKNKGGHVIDIVCKYFLEAVENNKYGWFWECPNGGDKCQYRHCLPEGYVLKKDRKAMEAQKEDEISIEELVEKERAALNSKDLTKLTLQTFVAWKKKKLKERKEKEEADLKAKKEKIKSGKHNGMSGRDLFLFDANLINNDDDEAGDIEMEKEEVDENEKVFEIDANFFKFDGMDDELTNQMSNSTAAVSSVAGAVAKMDINEDLFDIDEDVGDLDSDSDED.

2 consecutive C3H1-type zinc fingers follow at residues 89–116 (DPKS…HDLA) and 167–197 (YFLE…HCLP).

Belongs to the ZC3H15/TMA46 family.

The chain is Zinc finger CCCH domain-containing protein 15 homolog from Caenorhabditis briggsae.